The following is a 341-amino-acid chain: Basic membrane protein B (341 aa).

Residues 1–14 (MRIVIFILGILLTS) form the signal peptide. C15 carries the N-palmitoyl cysteine lipid modification. C15 carries the S-diacylglycerol cysteine lipid modification.

This sequence belongs to the BMP lipoprotein family. Monomer.

It is found in the cell inner membrane. In terms of biological role, may be part of an ABC-type nucleoside uptake system involved in the purine salvage pathway. In Borrelia garinii subsp. bavariensis (strain ATCC BAA-2496 / DSM 23469 / PBi) (Borreliella bavariensis), this protein is Basic membrane protein B (bmpB).